Consider the following 477-residue polypeptide: Tripartite motif-containing protein 72 (477 aa).

The Zn(2+) site is built by C14, C17, C29, H31, C34, C37, C53, C56, C86, H89, C97, D100, C105, C108, H114, and H117. The RING-type zinc-finger motif lies at 14 to 57 (CPLCLQLFDAPVTAECGHSFCRACLIRVAGEPADDGTVACPCCQ). The B box-type zinc finger occupies 81–122 (VPQGHCEEHLDPLSIYCEQDRTLVCGVCASLGSHRGHRLLPA). Residues 135–232 (QQKAQLQEAC…EKVLEEVADK (98 aa)) are a coiled coil. C144 is modified (S-nitrosocysteine). Phosphoserine is present on S255. A B30.2/SPRY domain is found at 271-475 (DFKFQVWKKM…PLLLVGPDSE (205 aa)).

The protein belongs to the TRIM/RBCC family. As to quaternary structure, homodimer. Homooligomer; disulfide-linked. Oligomerizes on the phospholipid membrane. Interacts with DYSF and CAV3. Disulfide bond formation at Cys-242 occurs in case of membrane damage that cause the entry of the oxidized milieu of the extracellular space, resulting in homooligomerization. Post-translationally, S-nitrosylation at Cys-144 stabilizes TRIM72 and protects against oxidation-induced protein degradation and cell death.

It is found in the cell membrane. Its subcellular location is the sarcolemma. It localises to the cytoplasmic vesicle membrane. It catalyses the reaction S-ubiquitinyl-[E2 ubiquitin-conjugating enzyme]-L-cysteine + [acceptor protein]-L-lysine = [E2 ubiquitin-conjugating enzyme]-L-cysteine + N(6)-ubiquitinyl-[acceptor protein]-L-lysine.. Its pathway is protein modification; protein ubiquitination. Its activity is regulated as follows. Specifically binds phosphatidylserine. The binding to phospholipids enhances ubiquitination activity. Functionally, muscle-specific E3 ubiquitin-protein ligase that plays a central role in cell membrane repair by nucleating the assembly of the repair machinery at injury sites. Its ubiquitination activity is mediated by E2 ubiquitin-conjugating enzymes UBE2D1, UBE2D2 and UBE2D3. Acts as a sensor of oxidation: upon membrane damage, entry of extracellular oxidative environment results in disulfide bond formation and homooligomerization at the injury site. This oligomerization acts as a nucleation site for recruitment of TRIM72-containing vesicles to the injury site, leading to membrane patch formation. Probably acts upstream of the Ca(2+)-dependent membrane resealing process. Required for transport of DYSF to sites of cell injury during repair patch formation. Regulates membrane budding and exocytosis. May be involved in the regulation of the mobility of KCNB1-containing endocytic vesicles. The protein is Tripartite motif-containing protein 72 of Rattus norvegicus (Rat).